The primary structure comprises 106 residues: Nucleoid-associated protein BRADO0764 (106 aa).

The protein belongs to the YbaB/EbfC family. Homodimer.

It localises to the cytoplasm. Its subcellular location is the nucleoid. In terms of biological role, binds to DNA and alters its conformation. May be involved in regulation of gene expression, nucleoid organization and DNA protection. In Bradyrhizobium sp. (strain ORS 278), this protein is Nucleoid-associated protein BRADO0764.